Here is a 692-residue protein sequence, read N- to C-terminus: MARQFPLERTRNIGIMAHIDAGKTTTTERILFYTGRVHKIGEVHDGAATMDWMVQEQERGITITSAATTAQWNGHRVNIIDTPGHVDFTVEVERSLRVLDGAVAVFCSVGGVEPQSETVWRQADKYGVPRLAYINKMDRVGADFFNGMDMIKNRLGANPVAIQLPIGSEDRFKGIVDLVTKKAIVYIDDLGTNSETTDIPADMVDQVEEYREKLLEAVAESDEELMMKYLEGEELTEEEIKVAIRKATLAVKITPVICGSSFKNKGVQSLLDAIVDYLPAPTDVPPIQGVNPDTGTEDQRISSDNEPFAALAFKIMTDPYVGKLSYFRVYSGTLKSGSYVLNSTKGKKERVGRILQMHANHREEIPEVYAGDIAAAVGLKDTTTGDTLCDEKSLIILESMEFPDPVIHVAIEPKTKADQDKMGVALSKLSEEDPTFKVRTDEETGQTIIAGMGELHLEIIVDRLLREFKVQANVGRPQVAYKETIRKAVKAEGKFVRQSGGKGQYGHVWIELEPLEAGGPGYEFVNKIVGGVVPREYIAPVDNGIKEAMENGILAGYQMVDIKATLYDGSYHEVDSSEMAFKIAGSMAFKNGAQKANPVLLEPIFKVEVTVPEEYMGDVIGDLNSRRGRIEEMGQRGNARIVSAFVPLAEMFGYATDLRSKTQGRGTYSMQHDHYEEVPKNIAEGIIAKRKG.

Residues 8-282 (ERTRNIGIMA…AIVDYLPAPT (275 aa)) form the tr-type G domain. Residues 17–24 (AHIDAGKT), 81–85 (DTPGH), and 135–138 (NKMD) each bind GTP.

This sequence belongs to the TRAFAC class translation factor GTPase superfamily. Classic translation factor GTPase family. EF-G/EF-2 subfamily.

Its subcellular location is the cytoplasm. Its function is as follows. Catalyzes the GTP-dependent ribosomal translocation step during translation elongation. During this step, the ribosome changes from the pre-translocational (PRE) to the post-translocational (POST) state as the newly formed A-site-bound peptidyl-tRNA and P-site-bound deacylated tRNA move to the P and E sites, respectively. Catalyzes the coordinated movement of the two tRNA molecules, the mRNA and conformational changes in the ribosome. The chain is Elongation factor G from Desulforamulus reducens (strain ATCC BAA-1160 / DSM 100696 / MI-1) (Desulfotomaculum reducens).